The chain runs to 136 residues: Small ribosomal subunit protein uS11c (136 aa).

Belongs to the universal ribosomal protein uS11 family. As to quaternary structure, part of the 30S ribosomal subunit.

The protein resides in the plastid. The protein localises to the chloroplast. The polypeptide is Small ribosomal subunit protein uS11c (Guizotia abyssinica (Niger)).